The primary structure comprises 148 residues: Lysozyme C-2 (148 aa).

A signal peptide spans 1 to 18 (MKTLLTLGLLLLSVTAQA). The region spanning 19–148 (KVYERCEFAR…LSQYIRNCGV (130 aa)) is the C-type lysozyme domain. Disulfide bonds link C24/C146, C48/C134, C83/C99, and C95/C113. Catalysis depends on residues E53 and D71.

The protein belongs to the glycosyl hydrolase 22 family. In terms of assembly, monomer. As to expression, expressed weakly in myeloblasts, moderately in immature macrophages, and strongly in both mature macrophages and macrophage-rich tissues.

It is found in the secreted. The enzyme catalyses Hydrolysis of (1-&gt;4)-beta-linkages between N-acetylmuramic acid and N-acetyl-D-glucosamine residues in a peptidoglycan and between N-acetyl-D-glucosamine residues in chitodextrins.. Functionally, lysozymes have primarily a bacteriolytic function; those in tissues and body fluids are associated with the monocyte-macrophage system and enhance the activity of immunoagents. Lyz2 is active against a range of Gram-positive and Gram-negative bacteria. More effective than Lyz1 in killing Gram-negative bacteria. Lyz1 and Lyz2 are equally effective in killing Gram-positive bacteria. This chain is Lysozyme C-2 (Lyz2), found in Mus musculus (Mouse).